Reading from the N-terminus, the 155-residue chain is Cytochrome c-type biogenesis protein CcmE (155 aa).

Residues 1-8 (MNPVRKRR) are Cytoplasmic-facing. A helical; Signal-anchor for type II membrane protein membrane pass occupies residues 9–29 (LFIVLAILAGVGAAVALALSA). The Periplasmic segment spans residues 30–155 (LQQNINLFYT…YENGKPGGAQ (126 aa)). Heme-binding residues include H124 and Y128.

It belongs to the CcmE/CycJ family.

The protein resides in the cell inner membrane. Functionally, heme chaperone required for the biogenesis of c-type cytochromes. Transiently binds heme delivered by CcmC and transfers the heme to apo-cytochromes in a process facilitated by CcmF and CcmH. This Azotobacter vinelandii (strain DJ / ATCC BAA-1303) protein is Cytochrome c-type biogenesis protein CcmE.